The primary structure comprises 729 residues: ATP-dependent DNA helicase Hel308 (729 aa).

Residues Q28 and 46-53 (IPTASGKT) contribute to the ATP site. A Helicase ATP-binding domain is found at 33-199 (EKGLLEGRNL…WLEAELVVSE (167 aa)). The DEAH box motif lies at 144 to 147 (DEVH). The 195-residue stretch at 232 to 426 (AVNLALDTLK…SKLGTENALR (195 aa)) folds into the Helicase C-terminal domain. The interval 706–729 (SSGIIASEPPEKSPYSGQKTISDY) is disordered. A compositionally biased stretch (polar residues) spans 720 to 729 (YSGQKTISDY).

This sequence belongs to the helicase family. Hel308 subfamily. As to quaternary structure, monomer.

It carries out the reaction Couples ATP hydrolysis with the unwinding of duplex DNA by translocating in the 3'-5' direction.. It catalyses the reaction ATP + H2O = ADP + phosphate + H(+). DNA-dependent ATPase and 3'-5' DNA helicase that may be involved in repair of stalled replication forks. The chain is ATP-dependent DNA helicase Hel308 from Methanosarcina barkeri (strain Fusaro / DSM 804).